Here is a 193-residue protein sequence, read N- to C-terminus: Holliday junction branch migration complex subunit RuvA (193 aa).

A domain I region spans residues 1–64 (MIGRIAGTLL…EDAHLLYGFL (64 aa)). Positions 65–139 (TPQERSTFRE…GKLGADLGPL (75 aa)) are domain II. Residues 139–143 (LAGAA) form a flexible linker region. Residues 144 to 193 (SPSDHAADILNALLALGYSEKEALAAIKNVPAGTGVSEGIKLSLKALSKA) form a domain III region.

The protein belongs to the RuvA family. As to quaternary structure, homotetramer. Forms an RuvA(8)-RuvB(12)-Holliday junction (HJ) complex. HJ DNA is sandwiched between 2 RuvA tetramers; dsDNA enters through RuvA and exits via RuvB. An RuvB hexamer assembles on each DNA strand where it exits the tetramer. Each RuvB hexamer is contacted by two RuvA subunits (via domain III) on 2 adjacent RuvB subunits; this complex drives branch migration. In the full resolvosome a probable DNA-RuvA(4)-RuvB(12)-RuvC(2) complex forms which resolves the HJ.

The protein resides in the cytoplasm. The RuvA-RuvB-RuvC complex processes Holliday junction (HJ) DNA during genetic recombination and DNA repair, while the RuvA-RuvB complex plays an important role in the rescue of blocked DNA replication forks via replication fork reversal (RFR). RuvA specifically binds to HJ cruciform DNA, conferring on it an open structure. The RuvB hexamer acts as an ATP-dependent pump, pulling dsDNA into and through the RuvAB complex. HJ branch migration allows RuvC to scan DNA until it finds its consensus sequence, where it cleaves and resolves the cruciform DNA. In Burkholderia thailandensis (strain ATCC 700388 / DSM 13276 / CCUG 48851 / CIP 106301 / E264), this protein is Holliday junction branch migration complex subunit RuvA.